Here is a 734-residue protein sequence, read N- to C-terminus: Photosystem I P700 chlorophyll a apoprotein A2 (734 aa).

The next 8 helical transmembrane spans lie at 46-69 (IFAS…FHVA), 135-158 (LYTG…LHLQ), 175-199 (LNHH…HVAI), 273-291 (IAHH…GHMY), 330-353 (LHFQ…QHMY), 369-395 (AALY…IFFI), 417-439 (AIIS…LYVH), and 517-535 (FLVH…LILV). [4Fe-4S] cluster-binding residues include Cys559 and Cys568. 2 helical membrane passes run 575–596 (AFYL…YWHW) and 643–665 (LSVW…MFLI). Chlorophyll a contacts are provided by His654, Met662, and Tyr670. A phylloquinone-binding site is contributed by Trp671. A helical membrane pass occupies residues 707 to 727 (LVGLAHFSVGYIFTYAAFLIA).

Belongs to the PsaA/PsaB family. In terms of assembly, the PsaA/B heterodimer binds the P700 chlorophyll special pair and subsequent electron acceptors. PSI consists of a core antenna complex that captures photons, and an electron transfer chain that converts photonic excitation into a charge separation. The eukaryotic PSI reaction center is composed of at least 11 subunits. Requires P700 is a chlorophyll a/chlorophyll a' dimer, A0 is one or more chlorophyll a, A1 is one or both phylloquinones and FX is a shared 4Fe-4S iron-sulfur center. as cofactor.

It is found in the plastid. The protein localises to the chloroplast thylakoid membrane. It carries out the reaction reduced [plastocyanin] + hnu + oxidized [2Fe-2S]-[ferredoxin] = oxidized [plastocyanin] + reduced [2Fe-2S]-[ferredoxin]. PsaA and PsaB bind P700, the primary electron donor of photosystem I (PSI), as well as the electron acceptors A0, A1 and FX. PSI is a plastocyanin-ferredoxin oxidoreductase, converting photonic excitation into a charge separation, which transfers an electron from the donor P700 chlorophyll pair to the spectroscopically characterized acceptors A0, A1, FX, FA and FB in turn. Oxidized P700 is reduced on the lumenal side of the thylakoid membrane by plastocyanin. The protein is Photosystem I P700 chlorophyll a apoprotein A2 of Piper cenocladum (Ant piper).